A 313-amino-acid chain; its full sequence is Olfactory receptor 6E1 (313 aa).

The N-linked (GlcNAc...) asparagine glycan is linked to Asn3. Transmembrane regions (helical) follow at residues 25 to 45, 64 to 84, 96 to 116, 142 to 162, 192 to 212, 238 to 258, and 271 to 291; these read IFLGFLLTYFLILLGNFLIIF, FAMLEIWFTSVIFPKMLTNII, FLQAFLYFFLGTTEFFLLAVM, LVFCSWMSGLLLIIVPSSIVF, LVEFLGFVIANFSLLGTLAVT, TCSSHIIVVSLFYGSCIFMYV, and KVVALLNTVVTPTLNPFIYTL. Cys95 and Cys177 form a disulfide bridge.

Belongs to the G-protein coupled receptor 1 family.

It is found in the cell membrane. Functionally, odorant receptor. Activated by (-)-citronellal and to a lesser extent by (+)-citronellal. Not activated by carvone or limonene. The sequence is that of Olfactory receptor 6E1 from Mus musculus (Mouse).